The sequence spans 272 residues: Aquaporin FA-CHIP (272 aa).

The Cytoplasmic segment spans residues 1 to 17 (MASEFKKKAFWRAVIAE). Residues 18–35 (FLAMILFVFISIGAALGF) traverse the membrane as a helical segment. Residues 36–52 (NFPIEEKANQTVGRSQD) are Extracellular-facing. Asn44 carries an N-linked (GlcNAc...) asparagine glycan. Residues 53–71 (IVKVSLAFGISIATMAQSV) traverse the membrane as a helical segment. The Cytoplasmic segment spans residues 72–97 (GHVSGAHLNPAVTLGCLLSCQISILK). The short motif at 80–82 (NPA) is the NPA 1 element. Residues 98–119 (AVMYIIAQCLGAVVATAILSGI) traverse the membrane as a helical segment. The Extracellular segment spans residues 120–139 (TSGLENNSLGLNGLSPGVSA). An N-linked (GlcNAc...) asparagine glycan is attached at Asn125. Residues 140 to 160 (GQGLGVEILVTFQLVLCVVAV) traverse the membrane as a helical segment. Topologically, residues 161–168 (TDRRRHDV) are cytoplasmic. Residues 169–188 (SGSVPLAIGLSVALGHLIAI) traverse the membrane as a helical segment. The Extracellular portion of the chain corresponds to 189–214 (DYTGCGMNPARSFGSAVLTKNFTYHW). The NPA 2 motif lies at 196–198 (NPA). Residue Asn209 is glycosylated (N-linked (GlcNAc...) asparagine). The chain crosses the membrane as a helical span at residues 215–236 (IFWVGPMIGGAAAAIIYDFILA). The Cytoplasmic portion of the chain corresponds to 237–272 (PRTSDLTDRMKVWTNGQVEEYELDGDDNTRVEMKPK).

The protein belongs to the MIP/aquaporin (TC 1.A.8) family.

It localises to the membrane. In terms of biological role, forms a water-specific channel. The chain is Aquaporin FA-CHIP (AQPA) from Pelophylax lessonae (Pool frog).